A 371-amino-acid chain; its full sequence is NADH-ubiquinone oxidoreductase chain 1 (371 aa).

10 helical membrane passes run 7–27 (IISI…VAYV), 44–64 (PNAV…KLLL), 77–97 (LFFL…AVIP), 109–129 (LGIL…LLAG), 153–173 (LVLS…NLGV), 180–200 (AVLF…GSIA), 226–246 (AVVF…MCIL), 263–283 (VFNI…NWMV), 302–322 (GWLY…IFIL), and 338–358 (FCWT…PCIL).

It belongs to the complex I subunit 1 family.

The protein resides in the mitochondrion inner membrane. It catalyses the reaction a ubiquinone + NADH + 5 H(+)(in) = a ubiquinol + NAD(+) + 4 H(+)(out). In terms of biological role, core subunit of the mitochondrial membrane respiratory chain NADH dehydrogenase (Complex I) that is believed to belong to the minimal assembly required for catalysis. Complex I functions in the transfer of electrons from NADH to the respiratory chain. The immediate electron acceptor for the enzyme is believed to be ubiquinone. This is NADH-ubiquinone oxidoreductase chain 1 (ndh-1) from Neurospora crassa (strain ATCC 24698 / 74-OR23-1A / CBS 708.71 / DSM 1257 / FGSC 987).